We begin with the raw amino-acid sequence, 259 residues long: (3R)-3-hydroxyacyl-CoA dehydrogenase (259 aa).

Residues 13 to 21 and 40 to 41 each bind NAD(+); these read LVTGAGSGI and DL. Ser-58 is modified (phosphoserine). 72–74 contacts NAD(+); the sequence is ADV. A substrate-binding site is contributed by Ser-154. At Lys-158 the chain carries N6-succinyllysine. The active-site Proton acceptor is Tyr-167. NAD(+)-binding positions include 167–171 and 200–202; these read YAASK and ITT. The residue at position 171 (Lys-171) is an N6-succinyllysine.

It belongs to the short-chain dehydrogenases/reductases (SDR) family. Heterotetramer with CBR4; contains two molecules of HSD17B8 and CBR4.

The protein localises to the mitochondrion matrix. The enzyme catalyses a (3R)-3-hydroxyacyl-CoA + NAD(+) = a 3-oxoacyl-CoA + NADH + H(+). The catalysed reaction is 17beta-estradiol + NAD(+) = estrone + NADH + H(+). It carries out the reaction testosterone + NAD(+) = androst-4-ene-3,17-dione + NADH + H(+). It catalyses the reaction 17beta-hydroxy-5alpha-androstan-3-one + NAD(+) = 5alpha-androstan-3,17-dione + NADH + H(+). Its pathway is steroid biosynthesis; estrogen biosynthesis. It functions in the pathway lipid metabolism; fatty acid biosynthesis. It participates in lipid metabolism; mitochondrial fatty acid beta-oxidation. Functionally, required for the solubility and assembly of the heterotetramer 3-ketoacyl-[acyl carrier protein] (ACP) reductase functional complex (KAR or KAR1) that forms part of the mitochondrial fatty acid synthase (mtFAS). Alpha-subunit of the KAR complex that acts as scaffold protein required for the stability of carbonyl reductase type-4 (CBR4, beta-subunit of the KAR complex) and for its 3-ketoacyl-ACP reductase activity, thereby participating in mitochondrial fatty acid biosynthesis. Catalyzes the NAD-dependent conversion of (3R)-3-hydroxyacyl-CoA into 3-ketoacyl-CoA (3-oxoacyl-CoA) with no chain length preference; this enzymatic activity is not needed for the KAR function. Prefers (3R)-3-hydroxyacyl-CoA over (3S)-3-hydroxyacyl-CoA and displays enzymatic activity only in the presence of NAD(+). Cooperates with enoyl-CoA hydratase 1 in mitochondria, together they constitute an alternative route to the auxiliary enzyme pathways for the breakdown of Z-PUFA (cis polyunsaturated fatty acid) enoyl-esters. NAD-dependent 17-beta-hydroxysteroid dehydrogenase with highest activity towards estradiol (17beta-estradiol or E2). Has very low activity towards testosterone and dihydrotestosterone (17beta-hydroxy-5alpha-androstan-3-one). Primarily an oxidative enzyme, it can switch to a reductive mode determined in the appropriate physiologic milieu and catalyze the reduction of estrone (E1) to form biologically active 17beta-estradiol. This is (3R)-3-hydroxyacyl-CoA dehydrogenase (HSD17B8) from Canis lupus familiaris (Dog).